Here is a 154-residue protein sequence, read N- to C-terminus: Small ribosomal subunit protein uS15 (154 aa).

Positions 1–11 (MSRLHAHKRYH) are enriched in basic residues. A disordered region spans residues 1–24 (MSRLHAHKRYHGQSGSKRPLRTTK).

Belongs to the universal ribosomal protein uS15 family. Part of the 30S ribosomal subunit.

The sequence is that of Small ribosomal subunit protein uS15 from Nanoarchaeum equitans (strain Kin4-M).